A 212-amino-acid chain; its full sequence is Hemagglutinin 2 (212 aa).

The protein resides in the secreted. Its function is as follows. Induces agglutination of neuraminidase-treated erythrocytes. This Eikenella corrodens protein is Hemagglutinin 2 (hag2).